A 48-amino-acid polypeptide reads, in one-letter code: uncharacterized protein (48 aa).

The protein belongs to the ELIP/psbS family.

It localises to the plastid. It is found in the chloroplast. In terms of biological role, possible role in chlorophyll and/or carotenoid binding. This is an uncharacterized protein from Porphyra purpurea (Red seaweed).